The following is a 22-amino-acid chain: Melittin-related peptide FQ-22-1 (22 aa).

At Gln22 the chain carries Glutamine amide.

In terms of tissue distribution, expressed by the skin glands.

Its subcellular location is the secreted. This chain is Melittin-related peptide FQ-22-1, found in Rana arvalis (Moor frog).